Here is a 248-residue protein sequence, read N- to C-terminus: Methionine aminopeptidase 1 (248 aa).

H77 lines the substrate pocket. A divalent metal cation-binding residues include D94, D105, and H168. Residue H175 coordinates substrate. Residues E201 and E232 each coordinate a divalent metal cation.

In terms of assembly, monomer. It depends on Co(2+) as a cofactor. The cofactor is Zn(2+). Mn(2+) serves as cofactor. Fe(2+) is required as a cofactor.

The protein localises to the cytoplasm. The catalysed reaction is Release of N-terminal amino acids, preferentially methionine, from peptides and arylamides.. Functionally, removes the N-terminal methionine from nascent proteins. The N-terminal methionine is often cleaved when the second residue in the primary sequence is small and uncharged (Met-Ala-, Cys, Gly, Pro, Ser, Thr, or Val). Requires deformylation of the N(alpha)-formylated initiator methionine before it can be hydrolyzed. This Bacillus subtilis (strain 168) protein is Methionine aminopeptidase 1.